The sequence spans 128 residues: Aspartate 1-decarboxylase (128 aa).

Ser25 functions as the Schiff-base intermediate with substrate; via pyruvic acid in the catalytic mechanism. Position 25 is a pyruvic acid (Ser) (Ser25). Thr57 is a substrate binding site. Catalysis depends on Tyr58, which acts as the Proton donor. 73-75 (GSA) is a binding site for substrate.

Belongs to the PanD family. As to quaternary structure, heterooctamer of four alpha and four beta subunits. Pyruvate serves as cofactor. Is synthesized initially as an inactive proenzyme, which is activated by self-cleavage at a specific serine bond to produce a beta-subunit with a hydroxyl group at its C-terminus and an alpha-subunit with a pyruvoyl group at its N-terminus.

Its subcellular location is the cytoplasm. The catalysed reaction is L-aspartate + H(+) = beta-alanine + CO2. Its pathway is cofactor biosynthesis; (R)-pantothenate biosynthesis; beta-alanine from L-aspartate: step 1/1. Its function is as follows. Catalyzes the pyruvoyl-dependent decarboxylation of aspartate to produce beta-alanine. The polypeptide is Aspartate 1-decarboxylase (Burkholderia mallei (strain NCTC 10247)).